A 1207-amino-acid chain; its full sequence is DNA-directed RNA polymerase, mitochondrial (1207 aa).

A mitochondrion-targeting transit peptide spans 1 to 41; sequence MSALRWTRSAAGLGRVLRSPGPHRPPSEEGTFGGFCSSRRS. Disordered stretches follow at residues 1 to 48 and 82 to 103; these read MSAL…SPRE and KKVQVDRPPQGHSSRWAQKLEA. PPR repeat units lie at residues 232-266 and 267-302; these read TLHMYNTVMLGWARKGSFRELVYVFLMLKDAGLSP and DLCSYAAALQCMGRRDQDVRTIQRCLKQMMEEGFQP. The interval 702–724 is disordered; sequence VPPPRSEAPRPARYQLPPGSTPV. The segment at 773–1207 is mediates interaction with TEFM; sequence FRGRTYPCPP…QVIRSTYFFS (435 aa). Catalysis depends on residues D893, K962, and D1121.

It belongs to the phage and mitochondrial RNA polymerase family. Homodimer. Component of the mitochondrial transcription initiation complex, composed at least of TFB2M, TFAM and POLRMT. In this complex TFAM recruits POLRMT to the promoter whereas TFB2M induces structural changes in POLRMT to enable promoter opening and trapping of the DNA non-template strand. Upon metabolic stress, forms a complex composed of FOXO3, SIRT3 and mitochondrial RNA polymerase POLRMT; the complex is recruited to mtDNA in a SIRT3-dependent manner. Also forms a complex composed of FOXO3, SIRT3, TFAM and POLRMT. Interacts with TFB1M and TFB2M, leading to the stimulation of transcription. Interacts with TEFM. Interacts with MTRES1.

Its subcellular location is the mitochondrion. It carries out the reaction RNA(n) + a ribonucleoside 5'-triphosphate = RNA(n+1) + diphosphate. In terms of biological role, DNA-dependent RNA polymerase catalyzes the transcription of mitochondrial DNA into RNA using the four ribonucleoside triphosphates as substrates. Component of the mitochondrial transcription initiation complex, composed at least of TFB2M, TFAM and POLRMT that is required for basal transcription of mitochondrial DNA. In this complex, TFAM recruits POLRMT to a specific promoter whereas TFB2M induces structural changes in POLRMT to enable promoter opening and trapping of the DNA non-template strand. Has DNA primase activity. Catalyzes the synthesis of short RNA primers that are necessary for the initiation of lagging-strand DNA synthesis from the origin of light-strand DNA replication (OriL). The chain is DNA-directed RNA polymerase, mitochondrial from Mus musculus (Mouse).